A 71-amino-acid chain; its full sequence is MKYIFISYTYYHSYSISIGIYALLCFTLFLLLPLIDTPRYPRTTYYQRNAATVAQLVCTLTFVCPLKLRVG.

This is an uncharacterized protein from Thermoproteus tenax virus 1 (strain KRA1) (TTV1).